A 291-amino-acid polypeptide reads, in one-letter code: 3-hydroxy-5-phosphonooxypentane-2,4-dione thiolase (291 aa).

K203 functions as the Schiff-base intermediate with substrate in the catalytic mechanism.

The protein belongs to the DeoC/FbaB aldolase family. In terms of assembly, homodecamer.

Its subcellular location is the cytoplasm. It catalyses the reaction dihydroxyacetone phosphate + acetyl-CoA = 3-hydroxy-2,4-dioxopentyl phosphate + CoA. Involved in the degradation of phospho-AI-2, thereby terminating induction of the lsr operon and closing the AI-2 signaling cycle. Catalyzes the transfer of an acetyl moiety from 3-hydroxy-5-phosphonooxypentane-2,4-dione to CoA to form glycerone phosphate and acetyl-CoA. The sequence is that of 3-hydroxy-5-phosphonooxypentane-2,4-dione thiolase from Photorhabdus laumondii subsp. laumondii (strain DSM 15139 / CIP 105565 / TT01) (Photorhabdus luminescens subsp. laumondii).